The primary structure comprises 134 residues: Fluoride-specific ion channel FluC 2 (134 aa).

Transmembrane regions (helical) follow at residues 1 to 21, 28 to 48, 68 to 88, and 92 to 112; these read MNYF…EITG, IFPV…LFFM, GFLG…LLLF, and LLIG…SGIL. Na(+)-binding residues include glycine 71 and threonine 74.

Belongs to the fluoride channel Fluc/FEX (TC 1.A.43) family.

The protein localises to the cell membrane. It carries out the reaction fluoride(in) = fluoride(out). Na(+) is not transported, but it plays an essential structural role and its presence is essential for fluoride channel function. Functionally, fluoride-specific ion channel. Important for reducing fluoride concentration in the cell, thus reducing its toxicity. This chain is Fluoride-specific ion channel FluC 2, found in Carboxydothermus hydrogenoformans (strain ATCC BAA-161 / DSM 6008 / Z-2901).